A 584-amino-acid polypeptide reads, in one-letter code: Extracellular serine/threonine protein kinase FAM20C (584 aa).

The Cytoplasmic portion of the chain corresponds to 1 to 10 (MKMMLVRRFR). Positions 1–92 (MKMMLVRRFR…PNKHTLRILQ (92 aa)) are excised as a propeptide. The chain crosses the membrane as a helical; Signal-anchor for type II membrane protein span at residues 11-31 (VLILMVFLVACALHIALDLLP). At 32 to 584 (RLERRGARPS…DTEHRAASAR (553 aa)) the chain is on the lumenal side. Disordered stretches follow at residues 62-81 (QVRG…GDAG) and 94-159 (FSSD…GDAS). 2 stretches are compositionally biased toward low complexity: residues 71–81 (PAASSAAGDAG) and 95–112 (SSDP…KLPP). The N-linked (GlcNAc...) asparagine glycan is linked to N101. S106 is subject to Phosphoserine. The span at 116 to 149 (PAERALRGRDPGALRPHDPAHRPLLRDPGPRRSE) shows a compositional bias: basic and acidic residues. ATP-binding residues include Q269, K285, and E306. Residue E306 participates in Mn(2+) binding. N335 carries N-linked (GlcNAc...) asparagine glycosylation. Positions 354-565 (FISPANNICF…AVRDCVERNG (212 aa)) are kinase domain. 2 disulfides stabilise this stretch: C362/C378 and C367/C371. 389–392 (AAFL) is a binding site for ATP. Intrachain disulfides connect C426-C500 and C501-C560. D458 is an active-site residue. E463 is an ATP binding site. N470 is a glycosylation site (N-linked (GlcNAc...) asparagine). D478 lines the ATP pocket. Mn(2+) is bound at residue D478.

This sequence belongs to the FAM20 family. As to quaternary structure, homodimer; disulfide-linked. Interacts with FAM20A; probably forming a heterotetramer of 2 subunits of FAM20A and 2 subunits of FAM20C. Interacts with protease MBTPS1/S1P; the interaction results in FAM20C cleavage and secretion. Interacts with COPII components SEC23A and SEC24A; transport of FAM20C from the endoplasmic reticulum to the Golgi is likely to be mediated by COPII vesicles. Requires Mn(2+) as cofactor. N-glycosylation is required for folding. In terms of processing, autophosphorylated. Post-translationally, propeptide cleavage by MBTPS1/S1P promotes FAM20C secretion and maximal kinase activity which is essential for efficient osteoblast differentiation and biomineralization. Widely expressed.

The protein resides in the golgi apparatus membrane. It is found in the secreted. The protein localises to the endoplasmic reticulum. The catalysed reaction is L-seryl-[protein] + ATP = O-phospho-L-seryl-[protein] + ADP + H(+). It catalyses the reaction L-threonyl-[protein] + ATP = O-phospho-L-threonyl-[protein] + ADP + H(+). Serine/threonine protein kinase activity is increased upon interaction with FAM20A. In terms of biological role, golgi serine/threonine protein kinase that phosphorylates secretory pathway proteins within Ser-x-Glu/pSer motifs and plays a key role in biomineralization of bones and teeth. Constitutes the main protein kinase for extracellular proteins, generating the majority of the extracellular phosphoproteome. Mainly phosphorylates proteins within the Ser-x-Glu/pSer motif, but also displays a broader substrate specificity. Phosphorylates ERO1A, enhancing its activity which is required to maintain endoplasmic reticulum redox homeostasis and for oxidative protein folding. During endoplasmic reticulum stress, phosphorylates P4HB/PDIA1 which induces a functional switch, causing P4HB to change from an oxidoreductase to a molecular chaperone. This is critical to maintain ER proteostasis and reduce cell death under ER stress. Phosphorylation of P4HB also promotes its interaction with ERN1, leading to reduced activity of ERN1, a key sensor for the endoplasmic reticulum unfolded protein response. Required for osteoblast differentiation and mineralization. Phosphorylates casein as well as a number of proteins involved in biomineralization such as AMELX, AMTN, ENAM and SPP1/OPN. In addition to its role in biomineralization, also plays a role in lipid homeostasis, wound healing and cell migration and adhesion. The polypeptide is Extracellular serine/threonine protein kinase FAM20C (Homo sapiens (Human)).